Here is a 647-residue protein sequence, read N- to C-terminus: Putative pre-mRNA-splicing factor ATP-dependent RNA helicase C20H4.09 (647 aa).

In terms of domain architecture, Helicase ATP-binding spans 35 to 199 (LYAVEQNQIT…FGQDKVCTMS (165 aa)). Residue 48–55 (GHTGCGKT) participates in ATP binding. A DEAH box motif is present at residues 146 to 149 (DEVH). The Helicase C-terminal domain maps to 219–398 (YVDSAIETVI…PLVLFLKGLG (180 aa)).

This sequence belongs to the DEAD box helicase family. DEAH subfamily.

It localises to the nucleus. The catalysed reaction is ATP + H2O = ADP + phosphate + H(+). Pre-mRNA processing factor involved in disassembly of spliceosomes after the release of mature mRNA. The sequence is that of Putative pre-mRNA-splicing factor ATP-dependent RNA helicase C20H4.09 from Schizosaccharomyces pombe (strain 972 / ATCC 24843) (Fission yeast).